The following is a 165-amino-acid chain: Protein-export protein SecB (165 aa).

It belongs to the SecB family. In terms of assembly, homotetramer, a dimer of dimers. One homotetramer interacts with 1 SecA dimer.

The protein resides in the cytoplasm. Its function is as follows. One of the proteins required for the normal export of preproteins out of the cell cytoplasm. It is a molecular chaperone that binds to a subset of precursor proteins, maintaining them in a translocation-competent state. It also specifically binds to its receptor SecA. This chain is Protein-export protein SecB, found in Colwellia psychrerythraea (strain 34H / ATCC BAA-681) (Vibrio psychroerythus).